The primary structure comprises 114 residues: Large ribosomal subunit protein bL20 (114 aa).

Belongs to the bacterial ribosomal protein bL20 family.

Binds directly to 23S ribosomal RNA and is necessary for the in vitro assembly process of the 50S ribosomal subunit. It is not involved in the protein synthesizing functions of that subunit. This is Large ribosomal subunit protein bL20 from Amoebophilus asiaticus (strain 5a2).